Here is a 282-residue protein sequence, read N- to C-terminus: Stress response regulator protein 1 (282 aa).

2 stretches are compositionally biased toward low complexity: residues 12-30 (NLSRSSSPAAPPTTNHSST) and 41-58 (SLDTNSQSDSNSTQSNNN). 3 disordered regions span residues 12–31 (NLSRSSSPAAPPTTNHSSTV), 41–84 (SLDT…DDED), and 112–139 (LTPFDGQTTSPQDSIISSKSSNKSTTVV). Residues 66 to 77 (SDYNSYTHNQYY) are compositionally biased toward polar residues. The span at 125–139 (SIISSKSSNKSTTVV) shows a compositional bias: low complexity. The region spanning 155-273 (SFLIVDDNII…LDFMANSIDD (119 aa)) is the Response regulatory domain. 4-aspartylphosphate is present on Asp206.

In terms of biological role, required for stress adaptation, morphogenesis and virulence. This is Stress response regulator protein 1 (SRR1) from Candida albicans (strain WO-1) (Yeast).